Here is a 119-residue protein sequence, read N- to C-terminus: Large ribosomal subunit protein bL20c (119 aa).

Belongs to the bacterial ribosomal protein bL20 family.

It is found in the plastid. The protein localises to the chloroplast. Its function is as follows. Binds directly to 23S ribosomal RNA and is necessary for the in vitro assembly process of the 50S ribosomal subunit. It is not involved in the protein synthesizing functions of that subunit. This Oryza sativa (Rice) protein is Large ribosomal subunit protein bL20c (rpl20).